A 308-amino-acid polypeptide reads, in one-letter code: Probable lipid phosphate phosphatase 4 (308 aa).

Helical transmembrane passes span 26–46 (WLIL…EPFH), 66–86 (IPMW…FIVY), 93–113 (VYDL…TGVT), 162–182 (SFPS…AWYL), 193–213 (GHVA…LIGI), and 226–246 (VFAG…HFFP). The interval 274 to 308 (MTRTGSRGMLGNDVEPGNSASSPHDRHRESTDSDF) is disordered. Residues 296 to 308 (PHDRHRESTDSDF) are compositionally biased toward basic and acidic residues.

This sequence belongs to the PA-phosphatase related phosphoesterase family.

The protein localises to the membrane. This chain is Probable lipid phosphate phosphatase 4 (LPP4), found in Arabidopsis thaliana (Mouse-ear cress).